A 282-amino-acid chain; its full sequence is Glutamate racemase (282 aa).

Substrate is bound by residues 13 to 14 and 45 to 46; these read DS and YG. C76 serves as the catalytic Proton donor/acceptor. 77–78 contacts substrate; that stretch reads NT. Catalysis depends on C186, which acts as the Proton donor/acceptor. Residue 187–188 coordinates substrate; that stretch reads TH.

The protein belongs to the aspartate/glutamate racemases family.

It catalyses the reaction L-glutamate = D-glutamate. The protein operates within cell wall biogenesis; peptidoglycan biosynthesis. In terms of biological role, provides the (R)-glutamate required for cell wall biosynthesis. In Ralstonia pickettii (strain 12J), this protein is Glutamate racemase.